The primary structure comprises 327 residues: MQSFNRINSMKYFPLSNGEQIPALGLGTWKSSPQVVGQAVEQALDLGYRHLDCAAIYGNEAEIGATLANAFTKGVVKREELWITSKLWSNAHHPDAVLPALEKTLQDLGLDYLDLYLIHWPVVIQPDVGFPESGDQLLPFTPASLEGTWQALEKAVDLGLCHHIGVSNFSLKKLEMVLSMARIPPAVNQVELHPYLQQSDLLTFANSQNILLTAYSPLGSGDRPAAFQQAAEPKLLTDPVINGIAAEQGCSAAQVLLAWAIQRGTVTIPKSVNPERLEQNLRAADITLTDSEMAKIALLDRHYRYVSGDFWTMPGSPYTLQNLWDEI.

NADP(+) is bound at residue 18 to 27; it reads GEQIPALGLG. Tyrosine 57 functions as the Proton donor in the catalytic mechanism. Residue histidine 119 participates in substrate binding. 216 to 280 lines the NADP(+) pocket; the sequence is SPLGSGDRPA…SVNPERLEQN (65 aa).

Belongs to the aldo/keto reductase family. In terms of assembly, monomer.

The enzyme catalyses a secondary alcohol + NADP(+) = a ketone + NADPH + H(+). Its activity is regulated as follows. Curcumin non-competitively inhibits the enzyme with respect to furfural. To a lesser extent, enzyme activity is also inhibited by indomethacin, coumarate, coumarin, and alrestatin. Functionally, aldo/keto reductase with broad substrate spectrum. Catalyzes the NADPH-dependent reduction of aldehyde- and ketone-groups of different classes of carbonyl compounds to the corresponding alcohols. Highest enzymatic efficiency is observed with 4-oxonon-2-enal (4-ONE) and 4-hydroxynon-2-enal (4-HNE), that are lipid peroxidation products, and 9,10-phenanthrenequinone (9,10-PQ), a photoproduct of phenanthrene that is one of the most prevalent polycyclic aromatic hydrocarbons in the environment. Is also active on sugar-derived reactive carbonyls such as methylglyoxal (MG), glyoxal and 3-deoxyglucosone (3-DG), and on other lipid-derived carbonyls such as acrolein. May be involved in the detoxification of the toxic lipid peroxidation products 4-ONE and 4-HNE besides many other exo- and endogenic reactive carbonyl compounds (RCs) that may lead to photoinhibition or other cell damages. The chain is Aldo/keto reductase slr0942 from Synechocystis sp. (strain ATCC 27184 / PCC 6803 / Kazusa).